The sequence spans 372 residues: Envelope phospholipase OPG057 (372 aa).

Positions 153–156 (YPPL) match the YPPL motif. S-palmitoyl cysteine; by host attachment occurs at residues cysteine 185 and cysteine 186. The PLD phosphodiesterase domain occupies 307–334 (FTIQNNTKLLIVDDEYVHITSANFDGTH).

It belongs to the orthopoxvirus OPG057 family. In terms of assembly, interacts with protein OPG190. Post-translationally, palmitoylated. Attachment of the palmitate moiety is essential for correct intracellular targeting and protein function.

It localises to the virion membrane. Its subcellular location is the host Golgi apparatus. It is found in the host trans-Golgi network. The protein localises to the host endoplasmic reticulum membrane. It carries out the reaction a 1,2-diacyl-sn-glycero-3-phosphocholine + H2O = a 1,2-diacyl-sn-glycero-3-phosphate + choline + H(+). Functionally, major envelope protein that plays a role in the biogenesis of the viral double membrane and in egress of virus from the host cell. Produces the wrapped form of virus that is required for cell-to-cell spread. Acts as a lipase with broad specificity including phospholipase C, phospholipase A, and triacylglycerol lipase activities. This chain is Envelope phospholipase OPG057 (OPG057), found in Cynomys gunnisoni (Gunnison's prairie dog).